The following is a 526-amino-acid chain: Tyrosine-protein kinase transforming protein Src (526 aa).

The segment at 1–52 (MGSSKSKPKDPSQRRRSLEPPDSTHHGGFPASQTPDETAAPDAHRNPSRSFG) is disordered. The N-myristoyl glycine; by host moiety is linked to residue G2. Basic and acidic residues predominate over residues 7–25 (KPKDPSQRRRSLEPPDSTH). In terms of domain architecture, SH3 spans 81-142 (GGVTTFVALY…PSNYVAPSDS (62 aa)). Residues 148-245 (WYFGKITRRE…GLCHRLTNVC (98 aa)) form the SH2 domain. Residues 267–517 (LRLEAKLGQG…TFKYLQAQLL (251 aa)) form the Protein kinase domain. ATP contacts are provided by residues 273–281 (LGQGCFGEV) and K295. The Proton acceptor role is filled by D386. Y416 carries the post-translational modification Phosphotyrosine; by autocatalysis.

Belongs to the protein kinase superfamily. Tyr protein kinase family. SRC subfamily. The cofactor is Mn(2+). In terms of processing, the phosphorylated form is termed pp60v-src.

It catalyses the reaction L-tyrosyl-[protein] + ATP = O-phospho-L-tyrosyl-[protein] + ADP + H(+). This phosphoprotein, required for both the initiation and the maintenance of neoplastic transformation, is a protein kinase that catalyzes the phosphorylation of tyrosine residues in vitro. The sequence is that of Tyrosine-protein kinase transforming protein Src (V-SRC) from Gallus gallus (Chicken).